We begin with the raw amino-acid sequence, 141 residues long: Lutropin subunit beta (141 aa).

A signal peptide spans 1 to 18; the sequence is MGTLQGLLLWLLLGTGGA. 6 disulfides stabilise this stretch: Cys29–Cys77, Cys43–Cys92, Cys46–Cys130, Cys54–Cys108, Cys58–Cys110, and Cys113–Cys120. Residue Asn33 is glycosylated (N-linked (GlcNAc...) asparagine).

It belongs to the glycoprotein hormones subunit beta family. In terms of assembly, heterodimer of a common alpha chain and a unique beta chain which confers biological specificity to thyrotropin, lutropin, follitropin and gonadotropin.

It localises to the secreted. Its function is as follows. Promotes spermatogenesis and ovulation by stimulating the testes and ovaries to synthesize steroids. The protein is Lutropin subunit beta (LHB) of Oryctolagus cuniculus (Rabbit).